Consider the following 4963-residue polypeptide: Kettin homolog (4963 aa).

Ig-like domains are found at residues 18 to 105, 133 to 220, and 303 to 392; these read PTFI…TCIL, PSAP…EAIS, and PIIR…ARIE. Disordered regions lie at residues 396-420, 466-501, 557-578, 598-622, and 652-696; these read LSVPDERRKENQLREQQERDRQQQQ, RRQLEHEKRLRQQQQQQLFEREKSEKEERARLEEER, IRPHQQQQQHYQQQQQSPRQEV, QLYQHQHQQHQQQQQQPQEQQQQRF, and TNGG…GHEH. 3 stretches are compositionally biased toward basic and acidic residues: residues 399–417, 466–475, and 484–501; these read PDERRKENQLREQQERDRQ, RRQLEHEKRL, and FEREKSEKEERARLEEER. Positions 401-517 form a coiled coil; the sequence is ERRKENQLRE…KHLRQQQQTQ (117 aa). Residues 557-576 are compositionally biased toward low complexity; the sequence is IRPHQQQQQHYQQQQQSPRQ. The segment covering 658–685 has biased composition (low complexity); sequence AANGSAKTANGSANGSANGSAVHAANGG. Ig-like domains are found at residues 706 to 796, 806 to 893, 937 to 1027, 1065 to 1155, 1199 to 1281, 1462 to 1554, 1594 to 1687, 1728 to 1819, 1992 to 2085, 2126 to 2217, 2258 to 2350, 2391 to 2481, 2522 to 2613, 2654 to 2745, 2787 to 2878, 2919 to 3010, 3051 to 3141, 3182 to 3273, 3314 to 3407, and 3448 to 3539; these read PQFL…FSLN, PEFT…GRVV, PKFE…ANIA, PNFH…ATII, FHCE…AELT, PKFL…ITVT, PPTF…ATIR, PAFV…VDIN, PPVF…IFLE, PTFT…CTVK, PKFV…ANFT, PQFI…AQLT, PKFV…GQLS, PSFV…ANVG, PQWV…ATVT, PNFL…ASIR, PAIT…ATLK, PRFI…ATIE, PAIV…FEVS, and PVFI…TKLT. A disulfide bridge connects residues C827 and C877. C1201 and C1265 are joined by a disulfide. C1618 and C1671 are joined by a disulfide. 2 disulfide bridges follow: C2016–C2069 and C2148–C2201. The span at 3567–3583 shows a compositional bias: basic and acidic residues; it reads EAPRPAREDAPDADHGP. A disordered region spans residues 3567–3590; that stretch reads EAPRPAREDAPDADHGPPKFTSAL. Ig-like domains lie at 3584 to 3677, 3720 to 3811, 3821 to 3913, 3962 to 4052, and 4098 to 4185; these read PKFT…LKVV, PSFS…GKIA, PQVV…TKIT, PEFR…AKLA, and PQFT…ATLD. 2 disulfides stabilise this stretch: C3606/C3659 and C3742/C3795. The required for F-actin binding stretch occupies residues 4193 to 4963; that stretch reads RQTKLRPANF…TSQAKLTLSR (771 aa). Positions 4319 to 4329 are enriched in basic and acidic residues; that stretch reads DQQEVGWERPD. The interval 4319-4357 is disordered; sequence DQQEVGWERPDWAGQDGTSKLPGADEGRFKKLPTPAPEL. Ig-like domains follow at residues 4546–4634, 4645–4733, 4752–4842, and 4872–4960; these read PTIS…ANLT, PDFS…ARLN, PRFT…LVLT, and PHFI…AKLT.

In terms of assembly, interacts (via Ig-like domains) with F-actin. Expressed in the pharyngeal, body wall, and anal depressor muscles. Expression in these muscles is higher in hermaphrodites than in males. Expressed in the vulva and the myoepithelial sheath of the proximal ovary. Expressed in the proximal gonad of males. Not expressed in the dense bodies of the obliquely striated body wall muscle.

The protein resides in the cytoplasm. It localises to the myofibril. Its subcellular location is the sarcomere. The protein localises to the cytoskeleton. Positively regulates actin filament organization and provides mechanical stability to the myofibrils during body wall muscle contraction. Required for the organization of sarcomeric actin filaments and myosin protein myo-3 in striated body wall muscle cells. Not required for assembly of dense bodies, which are a type of integrin-based adhesion structure that link the plasma membrane to thin filaments of myofibrils, in body wall muscle. Not required for the atn-1 protein to localize to the dense bodies. The protein is Kettin homolog of Caenorhabditis elegans.